Consider the following 504-residue polypeptide: Xylose import ATP-binding protein XylG (504 aa).

2 consecutive ABC transporter domains span residues 5-242 (LEMK…VGRE) and 259-500 (LRVE…VMEA). Residue 37–44 (GENGSGKS) coordinates ATP.

The protein belongs to the ABC transporter superfamily. Xylose importer (TC 3.A.1.2.4) family. In terms of assembly, the complex is composed of two ATP-binding proteins (XylG), two transmembrane proteins (XylH) and a solute-binding protein (XylF).

It localises to the cell inner membrane. The catalysed reaction is D-xylose(out) + ATP + H2O = D-xylose(in) + ADP + phosphate + H(+). Functionally, part of the ABC transporter complex XylFGH involved in xylose import. Responsible for energy coupling to the transport system. This Histophilus somni (strain 129Pt) (Haemophilus somnus) protein is Xylose import ATP-binding protein XylG.